We begin with the raw amino-acid sequence, 144 residues long: Large ribosomal subunit protein uL15 (144 aa).

Residues 20–49 (GRGIGSGLGKTGGRGHKGQKSRSGGFHKVG) form a disordered region. Residues 21–31 (RGIGSGLGKTG) show a composition bias toward gly residues.

This sequence belongs to the universal ribosomal protein uL15 family. Part of the 50S ribosomal subunit.

In terms of biological role, binds to the 23S rRNA. This Neisseria meningitidis serogroup C (strain 053442) protein is Large ribosomal subunit protein uL15.